The primary structure comprises 304 residues: Protoheme IX farnesyltransferase 1 (304 aa).

The next 8 membrane-spanning stretches (helical) occupy residues 24 to 44, 47 to 67, 99 to 119, 122 to 142, 150 to 170, 176 to 196, 228 to 248, and 280 to 300; these read VVVLMLITSLIGMLLATKAPL, FVPWQVLIFGNLGIGLCAGAA, MALGFALLLALAGMAVLLAFT, LTAWLTLASLLGYAALYTGFL, IVIGGLAGAAPPLLGWVAITG, PLLLVLIIFAWTPPHFWALCI, LVLFAVSLMPFVIHMSGLVYL, and YSIVYLFLLFMALLVDHYLPL.

Belongs to the UbiA prenyltransferase family. Protoheme IX farnesyltransferase subfamily.

It localises to the cell inner membrane. The catalysed reaction is heme b + (2E,6E)-farnesyl diphosphate + H2O = Fe(II)-heme o + diphosphate. It functions in the pathway porphyrin-containing compound metabolism; heme O biosynthesis; heme O from protoheme: step 1/1. Converts heme B (protoheme IX) to heme O by substitution of the vinyl group on carbon 2 of heme B porphyrin ring with a hydroxyethyl farnesyl side group. The sequence is that of Protoheme IX farnesyltransferase 1 from Pseudomonas paraeruginosa (strain DSM 24068 / PA7) (Pseudomonas aeruginosa (strain PA7)).